Consider the following 867-residue polypeptide: Protein translocase subunit SecA 1 (867 aa).

ATP-binding positions include glutamine 86, 104-108 (GEGKT), and aspartate 493.

This sequence belongs to the SecA family. Monomer and homodimer. Part of the essential Sec protein translocation apparatus which comprises SecA, SecYEG and auxiliary proteins SecDF. Other proteins may also be involved.

It localises to the cell membrane. Its subcellular location is the cytoplasm. It carries out the reaction ATP + H2O + cellular proteinSide 1 = ADP + phosphate + cellular proteinSide 2.. Functionally, part of the Sec protein translocase complex. Interacts with the SecYEG preprotein conducting channel. Has a central role in coupling the hydrolysis of ATP to the transfer of proteins into and across the cell membrane, serving as an ATP-driven molecular motor driving the stepwise translocation of polypeptide chains across the membrane. This chain is Protein translocase subunit SecA 1, found in Corynebacterium jeikeium (strain K411).